A 363-amino-acid polypeptide reads, in one-letter code: MGNIHIQTKSKEYDVYVGKESLSHLTTIVQNMQPAVSNIMIISDEAVASLHLQTVVDALQIDQKVFSFVVPSGEKEKSFENFYAAHTSALENKLDRNSLIVALGGGMIGDLAGFVAASFMRGIRFVQVPTTLLAHDSAVGGKVAINHPLGKNMIGAFHQPEAVVYHTPFLQSLPEKEWRSGYAEVIKHALIGDVKLYHWLKEEVQTLADLRDEKLIHILTKAIPVKANIVAQDETEKGVRAHLNFGHTLGHALEKELGYGNITHGDGVAVGMLFAIFLSEQVYKVNLAYEEMKQWFLKYGYPKMPSDLSVERLVGLMKQDKKANAGTIHMVLMQEYGVVNVVSIPDETVHIALEAFQKDMVEK.

Residues 72-77 (SGEKEK), 130-131 (TT), K142, and K151 each bind NAD(+). E184, H247, and H264 together coordinate Zn(2+).

Belongs to the sugar phosphate cyclases superfamily. Dehydroquinate synthase family. Co(2+) serves as cofactor. It depends on Zn(2+) as a cofactor. NAD(+) is required as a cofactor.

It localises to the cytoplasm. It carries out the reaction 7-phospho-2-dehydro-3-deoxy-D-arabino-heptonate = 3-dehydroquinate + phosphate. It functions in the pathway metabolic intermediate biosynthesis; chorismate biosynthesis; chorismate from D-erythrose 4-phosphate and phosphoenolpyruvate: step 2/7. Catalyzes the conversion of 3-deoxy-D-arabino-heptulosonate 7-phosphate (DAHP) to dehydroquinate (DHQ). This chain is 3-dehydroquinate synthase, found in Bacillus thuringiensis subsp. konkukian (strain 97-27).